A 475-amino-acid polypeptide reads, in one-letter code: Ankyrin repeat, SAM and basic leucine zipper domain-containing protein 1 (475 aa).

Positions 1 to 25 (MAASALRGLPVAGGGESSESEDDGW) are disordered. Phosphoserine is present on residues Ser17, Ser18, and Ser20. ANK repeat units follow at residues 45–74 (EKKE…SVDS), 78–107 (YGWT…NASF), 110–144 (DKQS…DPNV), 148–177 (RLMT…EVNT), 181–210 (NGYT…NKML), and 214–243 (DGKM…PLEG). The 63-residue stretch at 272-334 (SYTAFGDLEV…KILAALKELQ (63 aa)) folds into the SAM domain.

Interacts with DDX4, PIWIL1, RANBP9 and TDRD1.

The protein localises to the cytoplasm. Functionally, plays a central role during spermatogenesis by repressing transposable elements and preventing their mobilization, which is essential for the germline integrity. Acts via the piRNA metabolic process, which mediates the repression of transposable elements during meiosis by forming complexes composed of piRNAs and Piwi proteins and governs the methylation and subsequent repression of transposons. Its association with pi-bodies suggests a participation in the primary piRNAs metabolic process. Required prior to the pachytene stage to facilitate the production of multiple types of piRNAs, including those associated with repeats involved in the regulation of retrotransposons. May act by mediating protein-protein interactions during germ cell maturation. This is Ankyrin repeat, SAM and basic leucine zipper domain-containing protein 1 (ASZ1) from Pan troglodytes (Chimpanzee).